Reading from the N-terminus, the 571-residue chain is Folylpolyglutamate synthase (571 aa).

Residue 122 to 125 coordinates ATP; the sequence is GKGS. Residues Ser146, Glu215, and His243 each contribute to the Mg(2+) site. Residues Arg363 and Asp385 each contribute to the ATP site.

Belongs to the folylpolyglutamate synthase family. The cofactor is a monovalent cation. As to expression, expressed in both shoots and roots, but expression in roots is higher compared with shoots. Distinct expression in the quiescent center (QC) region of the root tip. Also expressed in vascular tissues of the cotyledons and hypocotyls, and the first true leaves of 7 days old seedlings.

The protein resides in the plastid. The protein localises to the chloroplast. The catalysed reaction is (6S)-5,6,7,8-tetrahydrofolyl-(gamma-L-Glu)(n) + L-glutamate + ATP = (6S)-5,6,7,8-tetrahydrofolyl-(gamma-L-Glu)(n+1) + ADP + phosphate + H(+). Its pathway is cofactor biosynthesis; tetrahydrofolylpolyglutamate biosynthesis. Catalyzes conversion of folates to polyglutamate derivatives allowing concentration of folate compounds in the cell and the intracellular retention of these cofactors, which are important substrates for most of the folate-dependent enzymes that are involved in one-carbon transfer reactions involved in purine, pyrimidine and amino acid synthesis. Essential for organellar and whole-plant folate homeostasis. Required for postembryonic root development. Generates polyglutamylated folate cofactors to support C1 metabolism required for meristem maintenance and cell expansion during postembryonic root development. This chain is Folylpolyglutamate synthase, found in Arabidopsis thaliana (Mouse-ear cress).